The following is a 117-amino-acid chain: Tyrosine-protein phosphatase 25 (117 aa).

The Tyrosine-protein phosphatase domain occupies 1–117; it reads WLMIIEQKCN…DLIGQSPIVV (117 aa). D85 lines the substrate pocket.

This sequence belongs to the protein-tyrosine phosphatase family.

It catalyses the reaction O-phospho-L-tyrosyl-[protein] + H2O = L-tyrosyl-[protein] + phosphate. The polypeptide is Tyrosine-protein phosphatase 25 (STY-25) (Styela plicata (Wrinkled sea squirt)).